The primary structure comprises 20 residues: D-alpha-glycerophosphatase (20 aa).

In terms of assembly, monomer. Mg(2+) serves as cofactor. Requires Mn(2+) as cofactor.

It is found in the cytoplasm. Its pathway is polyol metabolism; glycerol biosynthesis. This Bacillus licheniformis protein is D-alpha-glycerophosphatase.